A 459-amino-acid polypeptide reads, in one-letter code: MPLVLYNTLTRTKDVFEPLVPGHVGMYVCGPTVYDRAHIGNARPVIVFDVLYRLLKTLYPSVRYVRNITDVDDKINARAKESGEPISAITERTTAMFHEDIGALNCLLPDVEPRATAHITQMIAMIERLIAKGFAYAAEGHVLFAVGAMADYGALSRRSSDEMIAGARVEVAPYKKDPGDFVLWKPSSDDLPGWDSPWGRGRPGWHIECSAMSLQHLGETFDIHGGGQDLVFPHHENEIAQSTCANGKPFARFWLHNGWLMVEGEKMSKSLGNFFTVRDLLDQAPGEAIRLAMLTTHYHQPFDWTADGLKQAKATLDRLYTALRGVADIDANGYEGEAPLEVLAALKDDLNTPLAISHLHELAGALNKATGLEDKARRKGALLASGHLLGLLYQDPEAWFKGTGAADGPSDAEIEAAITARAEARKSRNFAEADRIRQDLAARGVVLEDGAGGTTWKRG.

Cys29 lines the Zn(2+) pocket. A 'HIGH' region motif is present at residues 31–41 (PTVYDRAHIGN). Positions 209, 234, and 238 each coordinate Zn(2+). The short motif at 266–270 (KMSKS) is the 'KMSKS' region element. Lys269 provides a ligand contact to ATP.

The protein belongs to the class-I aminoacyl-tRNA synthetase family. In terms of assembly, monomer. The cofactor is Zn(2+).

It localises to the cytoplasm. The catalysed reaction is tRNA(Cys) + L-cysteine + ATP = L-cysteinyl-tRNA(Cys) + AMP + diphosphate. The protein is Cysteine--tRNA ligase of Paramagnetospirillum magneticum (strain ATCC 700264 / AMB-1) (Magnetospirillum magneticum).